A 22-amino-acid polypeptide reads, in one-letter code: 50 kDa cell wall protein (22 aa).

The protein localises to the secreted. Its subcellular location is the cell wall. The polypeptide is 50 kDa cell wall protein (Nicotiana tabacum (Common tobacco)).